Consider the following 311-residue polypeptide: Olfactory receptor 1D4 (311 aa).

Over 1–25 (MDGDNQSENSQFLLLGISESPEQQQ) the chain is Extracellular. N-linked (GlcNAc...) asparagine glycosylation occurs at N5. The helical transmembrane segment at 26-49 (ILFWMFLSMYLVTVLGNVLIILAI) threads the bilayer. Residues 50-57 (SSDSHLHT) lie on the Cytoplasmic side of the membrane. The chain crosses the membrane as a helical span at residues 58 to 79 (PMYFFLANLSFTDLFFVTNTIP). The Extracellular portion of the chain corresponds to 80-100 (KMLVNFQSQNKAISYAGCLTQ). C97 and C189 form a disulfide bridge. Residues 101–120 (LYFLVSLVTLDNLILAVMAY) form a helical membrane-spanning segment. The Cytoplasmic segment spans residues 121–140 (DRYVAICCPLHYVTAMSPGL). Residues 141–158 (CVLLLSLCWGLSVLYGLL) traverse the membrane as a helical segment. At 159–196 (LTFLLTRVTFCGPREIHYLFCDMYILLWLACSNTHIIH) the chain is on the extracellular side. A helical membrane pass occupies residues 197–220 (TALIATGCFIFLTLLGFMTTSYVR). Residues 221–237 (IVRTILQMPSASKKYKT) are Cytoplasmic-facing. A helical transmembrane segment spans residues 238 to 260 (FSTCASHLGVVSLFYGTLAMVYL). Topologically, residues 261–271 (QPLHTYSMKDS) are extracellular. A helical transmembrane segment spans residues 272–291 (VATVMYAVLTPMMNPFIYSL). Topologically, residues 292 to 311 (RNKDMHGAPGRVLWRPFQRP) are cytoplasmic.

Belongs to the G-protein coupled receptor 1 family.

The protein localises to the cell membrane. Its function is as follows. Odorant receptor. This Homo sapiens (Human) protein is Olfactory receptor 1D4 (OR1D4).